We begin with the raw amino-acid sequence, 279 residues long: Proteasome subunit beta (279 aa).

Residues 1-56 constitute a propeptide, removed in mature form; by autocatalysis; that stretch reads MASQAMSWRGEGERVVRDLAAASTSSFVEHLSQSRPDLLPFGQALPAGVLPQTPHA. The active-site Nucleophile is Thr-57.

This sequence belongs to the peptidase T1B family. In terms of assembly, the 20S proteasome core is composed of 14 alpha and 14 beta subunits that assemble into four stacked heptameric rings, resulting in a barrel-shaped structure. The two inner rings, each composed of seven catalytic beta subunits, are sandwiched by two outer rings, each composed of seven alpha subunits. The catalytic chamber with the active sites is on the inside of the barrel. Has a gated structure, the ends of the cylinder being occluded by the N-termini of the alpha-subunits. Is capped by the proteasome-associated ATPase, ARC.

The protein localises to the cytoplasm. The catalysed reaction is Cleavage of peptide bonds with very broad specificity.. The protein operates within protein degradation; proteasomal Pup-dependent pathway. The formation of the proteasomal ATPase ARC-20S proteasome complex, likely via the docking of the C-termini of ARC into the intersubunit pockets in the alpha-rings, may trigger opening of the gate for substrate entry. Interconversion between the open-gate and close-gate conformations leads to a dynamic regulation of the 20S proteasome proteolysis activity. Functionally, component of the proteasome core, a large protease complex with broad specificity involved in protein degradation. The sequence is that of Proteasome subunit beta from Renibacterium salmoninarum (strain ATCC 33209 / DSM 20767 / JCM 11484 / NBRC 15589 / NCIMB 2235).